The sequence spans 179 residues: Acireductone dioxygenase (179 aa).

Fe(2+) is bound by residues histidine 99, histidine 101, glutamate 105, and histidine 143. Residues histidine 99, histidine 101, glutamate 105, and histidine 143 each contribute to the Ni(2+) site.

This sequence belongs to the acireductone dioxygenase (ARD) family. As to quaternary structure, monomer. The cofactor is Fe(2+). It depends on Ni(2+) as a cofactor.

It carries out the reaction 1,2-dihydroxy-5-(methylsulfanyl)pent-1-en-3-one + O2 = 3-(methylsulfanyl)propanoate + CO + formate + 2 H(+). The enzyme catalyses 1,2-dihydroxy-5-(methylsulfanyl)pent-1-en-3-one + O2 = 4-methylsulfanyl-2-oxobutanoate + formate + 2 H(+). The protein operates within amino-acid biosynthesis; L-methionine biosynthesis via salvage pathway; L-methionine from S-methyl-5-thio-alpha-D-ribose 1-phosphate: step 5/6. In terms of biological role, catalyzes 2 different reactions between oxygen and the acireductone 1,2-dihydroxy-3-keto-5-methylthiopentene (DHK-MTPene) depending upon the metal bound in the active site. Fe-containing acireductone dioxygenase (Fe-ARD) produces formate and 2-keto-4-methylthiobutyrate (KMTB), the alpha-ketoacid precursor of methionine in the methionine recycle pathway. Ni-containing acireductone dioxygenase (Ni-ARD) produces methylthiopropionate, carbon monoxide and formate, and does not lie on the methionine recycle pathway. The chain is Acireductone dioxygenase from Sulfurihydrogenibium sp. (strain YO3AOP1).